We begin with the raw amino-acid sequence, 504 residues long: ATP synthase subunit alpha, chloroplastic (504 aa).

169 to 176 (GDRQTGKT) is a binding site for ATP.

Belongs to the ATPase alpha/beta chains family. As to quaternary structure, F-type ATPases have 2 components, CF(1) - the catalytic core - and CF(0) - the membrane proton channel. CF(1) has five subunits: alpha(3), beta(3), gamma(1), delta(1), epsilon(1). CF(0) has four main subunits: a, b, b' and c.

It localises to the plastid. The protein resides in the chloroplast thylakoid membrane. The catalysed reaction is ATP + H2O + 4 H(+)(in) = ADP + phosphate + 5 H(+)(out). In terms of biological role, produces ATP from ADP in the presence of a proton gradient across the membrane. The alpha chain is a regulatory subunit. This Stigeoclonium helveticum (Green alga) protein is ATP synthase subunit alpha, chloroplastic.